The chain runs to 274 residues: Large ribosomal subunit protein uL2cz/uL2cy (274 aa).

The segment at 224-274 (NPVDHPHGGGEGRAPIGRKKPTTPWGYPALGRRSRKRNKYSDNLILRRRSK) is disordered.

It belongs to the universal ribosomal protein uL2 family. As to quaternary structure, part of the 50S ribosomal subunit.

It localises to the plastid. The protein resides in the chloroplast. The protein is Large ribosomal subunit protein uL2cz/uL2cy (rpl2-A) of Panax ginseng (Korean ginseng).